Consider the following 84-residue polypeptide: Large ribosomal subunit protein bL27 (84 aa).

A disordered region spans residues 1-27; sequence MAHKKGQGASRNGRDSKSKRLGVKVGA.

The protein belongs to the bacterial ribosomal protein bL27 family.

The sequence is that of Large ribosomal subunit protein bL27 from Chlamydia pneumoniae (Chlamydophila pneumoniae).